The following is a 102-amino-acid chain: Parathymosin (102 aa).

Positions 1–102 (MSEKSVEAAA…RQKTENGASA (102 aa)) are disordered. N-acetylserine is present on S2. S2 carries the post-translational modification Phosphoserine. K4 bears the N6-acetyllysine mark. Phosphoserine occurs at positions 5 and 13. Over residues 13–37 (SAKDLKEKKDKVEEKAGRKERKKEV) the composition is skewed to basic and acidic residues. An N6-acetyllysine modification is found at K15. Over residues 38-75 (VEEEENGAEEEEEETAEDGEDDDEGDEEDEEEEEEEDE) the composition is skewed to acidic residues. The residue at position 52 (T52) is a Phosphothreonine. Position 92 is an N6-acetyllysine (K92).

The protein belongs to the pro/parathymosin family.

In terms of biological role, parathymosin may mediate immune function by blocking the effect of prothymosin alpha which confers resistance to certain opportunistic infections. This Rattus norvegicus (Rat) protein is Parathymosin (Ptms).